The chain runs to 636 residues: Alpha-L-iduronidase (636 aa).

An N-terminal signal peptide occupies residues 1-16; the sequence is MLSLLLVLTTLARIHA. Positions 39, 43, and 45 each coordinate alpha-D-mannopyranose. Alpha-L-iduronate is bound by residues His78, Asn169, and Glu170. Residue Glu170 is the Proton donor of the active site. An N-linked (GlcNAc...) asparagine glycan is attached at Asn180. Lys257 contributes to the alpha-L-iduronate binding site. N-linked (GlcNAc...) asparagine glycosylation occurs at Asn268. Positions 293 and 299 each coordinate alpha-L-iduronate. The active-site Nucleophile is Glu293. Trp300 contacts alpha-D-mannopyranose. Residues Asp342 and Arg356 each contribute to the alpha-L-iduronate site. N-linked (GlcNAc...) asparagine glycosylation is found at Asn365, Asn448, Asn453, and Asn483. Cys529 and Cys565 are joined by a disulfide. N-linked (GlcNAc...) asparagine glycosylation occurs at Asn622.

The protein belongs to the glycosyl hydrolase 39 family.

The protein localises to the lysosome. The catalysed reaction is Hydrolysis of unsulfated alpha-L-iduronosidic linkages in dermatan sulfate.. Essential lysosomal hydrolase responsible for the degradation of glycosaminoglycans (GAG) such as heparan sulfate. Required for lysosome function and autophagy. Consequently, has an essential role in the development, maintenance and function of various cells, tissues, and organs, including the muscles and the central nervous system (CNS). This Drosophila melanogaster (Fruit fly) protein is Alpha-L-iduronidase.